Consider the following 496-residue polypeptide: Lysine--tRNA ligase (496 aa).

Glu409 and Glu416 together coordinate Mg(2+).

This sequence belongs to the class-II aminoacyl-tRNA synthetase family. Homodimer. It depends on Mg(2+) as a cofactor.

It localises to the cytoplasm. The enzyme catalyses tRNA(Lys) + L-lysine + ATP = L-lysyl-tRNA(Lys) + AMP + diphosphate. The protein is Lysine--tRNA ligase of Streptococcus pneumoniae serotype 4 (strain ATCC BAA-334 / TIGR4).